The chain runs to 142 residues: Ribonuclease VapC31 (142 aa).

The PINc domain maps to 3-139 (LLDANVLLAA…ARFASVRHIR (137 aa)). Residues aspartate 5 and aspartate 108 each coordinate Mg(2+).

It belongs to the PINc/VapC protein family. The cofactor is Mg(2+).

Functionally, toxic component of a type II toxin-antitoxin (TA) system. An RNase. Its toxic effect is neutralized by coexpression with cognate antitoxin VapB31. The chain is Ribonuclease VapC31 from Mycobacterium tuberculosis (strain CDC 1551 / Oshkosh).